The primary structure comprises 149 residues: D-aminoacyl-tRNA deacylase (149 aa).

Positions 137–138 (GP) match the Gly-cisPro motif, important for rejection of L-amino acids motif.

Belongs to the DTD family. Homodimer.

It localises to the cytoplasm. The enzyme catalyses glycyl-tRNA(Ala) + H2O = tRNA(Ala) + glycine + H(+). The catalysed reaction is a D-aminoacyl-tRNA + H2O = a tRNA + a D-alpha-amino acid + H(+). An aminoacyl-tRNA editing enzyme that deacylates mischarged D-aminoacyl-tRNAs. Also deacylates mischarged glycyl-tRNA(Ala), protecting cells against glycine mischarging by AlaRS. Acts via tRNA-based rather than protein-based catalysis; rejects L-amino acids rather than detecting D-amino acids in the active site. By recycling D-aminoacyl-tRNA to D-amino acids and free tRNA molecules, this enzyme counteracts the toxicity associated with the formation of D-aminoacyl-tRNA entities in vivo and helps enforce protein L-homochirality. This Clostridium beijerinckii (strain ATCC 51743 / NCIMB 8052) (Clostridium acetobutylicum) protein is D-aminoacyl-tRNA deacylase.